Reading from the N-terminus, the 341-residue chain is MAAAAELSSSSGSERSLEQCSSPLLTREVLCEVFRSLHTLTRQLNLRDDVVKITIDWNRLQSLSASQPALLLTALEQHVLYLQPFLAKLQSLMKENSTATEIRQTEAETKSELRAIHPTEDLQDEGKPKDCDVGDVKKTQNLFDPEVVQIKAGKAEIDRRISAFIERKQAEINENNVREFCNVIDCNQENSCARTDAVFTPYPGFKSHVKVSRVVNTYGPQTRPEGIAGSGHKPTGMLRDCGNQAVEERLQNIEAHLRLQTGGPVPRDIYQRIKKLEDKILELEGISPEYFQSVNFSGKRRKVQPPQQNYSLAELDEKISALKRALLRKSREADSMAAHLP.

Serine 91 is subject to Phosphoserine. Glycyl lysine isopeptide (Lys-Gly) (interchain with G-Cter in SUMO2) cross-links involve residues lysine 94, lysine 127, lysine 137, lysine 151, and lysine 233. Residues 170 to 341 (AEINENNVRE…EADSMAAHLP (172 aa)) form an interaction with MAP3K12 region. The leucine-zipper 1 stretch occupies residues 269–283 (IYQRIKKLEDKILEL). Lysine 299 carries the N6-acetyllysine; alternate modification. Residue lysine 299 forms a Glycyl lysine isopeptide (Lys-Gly) (interchain with G-Cter in SUMO2); alternate linkage. Residues lysine 302 and lysine 323 each participate in a glycyl lysine isopeptide (Lys-Gly) (interchain with G-Cter in SUMO2) cross-link. The interval 312–327 (LAELDEKISALKRALL) is leucine-zipper 2.

In terms of assembly, component of the ADA2A-containing complex (ATAC), composed of KAT14, KAT2A, TADA2L, TADA3L, ZZ3, MBIP, WDR5, YEATS2, CCDC101 and DR1. In the complex, it probably interacts directly with KAT2A, KAT14 and WDR5.

It is found in the nucleus. The protein localises to the cytoplasm. In terms of biological role, inhibits the MAP3K12 activity to induce the activation of the JNK/SAPK pathway. Component of the ATAC complex, a complex with histone acetyltransferase activity on histones H3 and H4. The chain is MAP3K12-binding inhibitory protein 1 (Mbip) from Mus musculus (Mouse).